Consider the following 134-residue polypeptide: Putative esterase PA0474 (134 aa).

This sequence belongs to the thioesterase PaaI family.

The chain is Putative esterase PA0474 from Pseudomonas aeruginosa (strain ATCC 15692 / DSM 22644 / CIP 104116 / JCM 14847 / LMG 12228 / 1C / PRS 101 / PAO1).